The chain runs to 444 residues: Phosphoglucosamine mutase (444 aa).

The Phosphoserine intermediate role is filled by serine 100. Positions 100, 240, 242, and 244 each coordinate Mg(2+). Serine 100 carries the post-translational modification Phosphoserine.

Belongs to the phosphohexose mutase family. Mg(2+) is required as a cofactor. In terms of processing, activated by phosphorylation.

The catalysed reaction is alpha-D-glucosamine 1-phosphate = D-glucosamine 6-phosphate. Functionally, catalyzes the conversion of glucosamine-6-phosphate to glucosamine-1-phosphate. This chain is Phosphoglucosamine mutase, found in Desulforamulus reducens (strain ATCC BAA-1160 / DSM 100696 / MI-1) (Desulfotomaculum reducens).